Here is a 665-residue protein sequence, read N- to C-terminus: Methionine--tRNA ligase (665 aa).

Residues 16–26 carry the 'HIGH' region motif; it reads YYPSGKAHIGH. Residues 311–315 carry the 'KMSKS' region motif; that stretch reads KMSKS. Lys-314 serves as a coordination point for ATP. The tRNA-binding domain maps to 564–665; that stretch reads DFDKIDLRVA…SALPNGAKVK (102 aa).

The protein belongs to the class-I aminoacyl-tRNA synthetase family. MetG type 2B subfamily. Homodimer.

The protein resides in the cytoplasm. The catalysed reaction is tRNA(Met) + L-methionine + ATP = L-methionyl-tRNA(Met) + AMP + diphosphate. Is required not only for elongation of protein synthesis but also for the initiation of all mRNA translation through initiator tRNA(fMet) aminoacylation. This Listeria monocytogenes serotype 4b (strain F2365) protein is Methionine--tRNA ligase.